Here is a 1959-residue protein sequence, read N- to C-terminus: Sodium channel protein type 10 subunit alpha (1959 aa).

Topologically, residues 1–125 are cytoplasmic; the sequence is MEFPIGSVGT…FNLIRRTAIK (125 aa). Positions 30–53 are disordered; sequence AHGAAKKARAKHGERKGQDEKPRP. The span at 33 to 43 shows a compositional bias: basic residues; the sequence is AAKKARAKHGE. Residues 44 to 53 show a composition bias toward basic and acidic residues; the sequence is RKGQDEKPRP. The I repeat unit spans residues 116–404; the sequence is FNLIRRTAIK…VTMAYEEQNQ (289 aa). A helical membrane pass occupies residues 126 to 149; the sequence is VSVHAWFSIFITITILFNCVCMTQ. Over 150-154 the chain is Extracellular; it reads NDLPE. Residues 155–174 form a helical membrane-spanning segment; sequence KIEYAFTVIYTFEALIKILA. The Cytoplasmic portion of the chain corresponds to 175–187; that stretch reads RGFCLNEFTYLRD. The helical transmembrane segment at 188-206 threads the bilayer; sequence PWNWLDFSVITLAYVGAAI. The Extracellular portion of the chain corresponds to 207–212; the sequence is DLRGIS. A helical; Voltage-sensor transmembrane segment spans residues 213-232; the sequence is GLRTFRVLRALKTVSVIPGL. Residues 233–248 are Cytoplasmic-facing; the sequence is KVIVGALIHSVRKLAD. The helical transmembrane segment at 249–272 threads the bilayer; the sequence is VTILTVFCLSVFALVGLQLFKGNL. Residues 273–340 are Extracellular-facing; the sequence is KNKCIKRSTD…PDFNYTSFDS (68 aa). Cysteine 276 and cysteine 318 are oxidised to a cystine. N-linked (GlcNAc...) asparagine glycans are attached at residues asparagine 288, asparagine 311, and asparagine 334. Residues 341–365 constitute an intramembrane region (pore-forming); sequence FAWAFLSLFRLMTQDSWERLYQQTL. Over 366 to 372 the chain is Extracellular; sequence RASGKMY. Residues 373–398 form a helical membrane-spanning segment; sequence MVFFVLVIFLGSFYLVNLILAVVTMA. Residues 399 to 659 lie on the Cytoplasmic side of the membrane; the sequence is YEEQNQATIA…KWMKFKMVLF (261 aa). A phosphoserine mark is found at serine 440, serine 443, serine 466, and serine 478. 2 disordered regions span residues 442–484 and 510–578; these read HSHN…YNQR and SQDV…ELTT. The span at 475–484 shows a compositional bias: polar residues; that stretch reads SPQSDPYNQR. Over residues 523–533 the composition is skewed to basic and acidic residues; sequence GVFHGDHESHR. Phosphoserine is present on residues serine 612 and serine 615. An II repeat occupies 647–911; it reads CCPKWMKFKM…EDDGEVNNLQ (265 aa). The chain crosses the membrane as a helical span at residues 660–684; sequence ELVTDPFAELTITLCIVVNTIFMAM. Over 685-695 the chain is Extracellular; sequence EHYPMTDAFDA. Residues 696–719 traverse the membrane as a helical segment; that stretch reads MLQAGNIVFTVFFTMEMAFKIIAF. Topologically, residues 720 to 727 are cytoplasmic; that stretch reads DPYYYFQK. Residues 728-747 traverse the membrane as a helical segment; the sequence is KWNVFDCVIVTVSLLELSIA. At 748-753 the chain is on the extracellular side; the sequence is KKGSLS. Residues 754–773 traverse the membrane as a helical; Voltage-sensor segment; the sequence is VLRTFRLLRVFKLAKSWPTL. Over 774-789 the chain is Cytoplasmic; that stretch reads NTLIKIIGNSVGALGN. A helical membrane pass occupies residues 790 to 810; it reads LTFILAIIVFIFALVGKQLLG. Topologically, residues 811-834 are extracellular; sequence EDYGCRKDGTALWNEGQLRWHMCD. Residues 835-855 constitute an intramembrane region (pore-forming); sequence FFHSFLVIFRILCGEWIENMW. The Extracellular segment spans residues 856 to 864; that stretch reads VCMQVSEKS. Cysteine 857 and cysteine 866 are joined by a disulfide. The helical transmembrane segment at 865–890 threads the bilayer; sequence ICLILFLTVMVLGNLVVLNLFIALLL. At 891–1149 the chain is on the cytoplasmic side; that stretch reads NSFSADNLTA…GWQVRKTCYR (259 aa). Residues 1004-1016 are compositionally biased toward acidic residues; sequence GESDLDELEEDIE. 2 disordered regions span residues 1004–1034 and 1071–1097; these read GESD…QQDQ and ATPQ…PDPE. The III repeat unit spans residues 1142–1451; it reads QVRKTCYRIV…KKYYNAMKKL (310 aa). Residues 1150–1173 form a helical membrane-spanning segment; it reads IVEHSWFESFIIFMILLSSGALAF. Topologically, residues 1174–1186 are extracellular; the sequence is EDNYLEQKPRVKS. A helical transmembrane segment spans residues 1187–1212; that stretch reads MLEYTDRVFTFIFVFEMLLKWVAYGF. Residues 1213-1218 lie on the Cytoplasmic side of the membrane; it reads KKYFTN. The chain crosses the membrane as a helical span at residues 1219–1240; the sequence is AWCWLDFLIVNISLTSLIAKIL. The Extracellular portion of the chain corresponds to 1241–1244; the sequence is DYSD. A helical; Voltage-sensor membrane pass occupies residues 1245–1266; the sequence is VASLKALRTLRALRPLRALSRF. Residues 1267-1285 lie on the Cytoplasmic side of the membrane; sequence EGMRVVVDALVGAIPSIMN. Residues 1286–1313 traverse the membrane as a helical segment; it reads VLLVCLIFWLIFSIMGVNLFAGKFSRCI. Residues 1314–1355 are Extracellular-facing; sequence DTSNNPFSVVNSTIVNNKSECRNQNHTGHFFWVNVKVNFDNV. Residues 1356-1377 constitute an intramembrane region (pore-forming); it reads AMGYLALLQVATFKGWMDIMYA. Over 1378–1393 the chain is Extracellular; the sequence is AVDSREINSQPQWEDN. The helical transmembrane segment at 1394 to 1420 threads the bilayer; the sequence is LYMYLYFVVFIIFGGFFTLNLFVGVII. Over 1421 to 1473 the chain is Cytoplasmic; it reads DNFNQQKKKLGGQDIFMTEEQKKYYNAMKKLGSKKPQKPIPRPLNKYQGFVFD. Serine 1453 is modified (phosphoserine; by PKC). Residues 1460-1759 form an IV repeat; sequence IPRPLNKYQG…WEKFDPEATQ (300 aa). The chain crosses the membrane as a helical span at residues 1474–1497; the sequence is IVTRQAFDIIIMVLICLNMITMMV. Over 1498-1508 the chain is Extracellular; sequence ETDGQSEEKTK. A helical transmembrane segment spans residues 1509 to 1532; that stretch reads ILGRINQFFVAVFTGECVMKMFAL. The Cytoplasmic segment spans residues 1533–1538; it reads RQYYFT. A helical transmembrane segment spans residues 1539-1562; sequence NGWNVFDFIVVILSIGSLVFSAIL. Residues 1563–1574 are Extracellular-facing; that stretch reads KSLESYFSPTLF. The helical; Voltage-sensor transmembrane segment at 1575 to 1596 threads the bilayer; that stretch reads RVIRLARIGRILRLIRAAKGIR. Residues 1597–1611 lie on the Cytoplasmic side of the membrane; the sequence is TLLFALMMSLPALFN. A helical membrane pass occupies residues 1612-1634; that stretch reads IGLLLFLVMFIYSIFGMASFANV. Residues 1635-1648 lie on the Extracellular side of the membrane; the sequence is VEEAGIDDMFNFQT. Positions 1649-1671 form an intramembrane region, pore-forming; the sequence is FGNSMLCLFQITTSAGWDGLLSP. Over 1672–1699 the chain is Extracellular; it reads ILNTGPPYCDPNLSNNNTSKGNCGSPTV. The chain crosses the membrane as a helical span at residues 1700 to 1724; it reads GIVFFTTYIIISFLIVVNMYIAVIL. Topologically, residues 1725–1959 are cytoplasmic; sequence ENFNVATEES…SKEGDSPGPQ (235 aa). The 30-residue stretch at 1853-1882 folds into the IQ domain; the sequence is EDISATVIQKAYRSYVLQRSLTLSNPLRVP. The disordered stretch occupies residues 1901 to 1959; it reads ANDSGRLPDKSETTSATSFPPSYDSVTRGLSDRVNISTSNSMHNEDEVTSKEGDSPGPQ. Basic and acidic residues predominate over residues 1943–1959; sequence HNEDEVTSKEGDSPGPQ.

This sequence belongs to the sodium channel (TC 1.A.1.10) family. Nav1.8/SCN10A subfamily. In terms of assembly, the channel consists of an ion conducting pore forming alpha-subunit regulated by one or more associated auxiliary subunits SCN1B, SCN2B and SCN3B; electrophysiological properties may vary depending on the type of the associated beta subunits. Found in a number of complexes with PRX, DYNLT1 and PDZD2. Interacts with proteins such as FSTL1, PRX, DYNLT1, PDZD2, S100A10 and many others. Interacts with NEDD4 and NEDD4L. Ubiquitinated by NEDD4L; which promotes its endocytosis. Post-translationally, phosphorylation at Ser-1453 by PKC in a highly conserved cytoplasmic loop slows inactivation of the sodium channel and reduces peak sodium currents. In terms of processing, lacks the cysteine which covalently binds the conotoxin GVIIJ. This cysteine (position 816) is speculated in other sodium channel subunits alpha to be implied in covalent binding with the sodium channel subunit beta-2 or beta-4.

The protein localises to the cell membrane. The catalysed reaction is Na(+)(in) = Na(+)(out). In terms of biological role, tetrodotoxin-resistant channel that mediates the voltage-dependent sodium ion permeability of excitable membranes. Assuming opened or closed conformations in response to the voltage difference across the membrane, the protein forms a sodium-selective channel through which sodium ions may pass in accordance with their electrochemical gradient. Plays a role in neuropathic pain mechanisms. The polypeptide is Sodium channel protein type 10 subunit alpha (Scn10a) (Onychomys torridus (Southern grasshopper mouse)).